A 319-amino-acid polypeptide reads, in one-letter code: Cutinase cut1 (319 aa).

Residues 1-58 form the signal peptide; sequence MPPHAARPGPAQNRRGRAMAVITPRRERSSLLSRALRFTAAAATALVTAVSLAAPAHA. Tyr-118 is a poly(ethylene terephthalate) binding site. Ser-188 (nucleophile) is an active-site residue. Poly(ethylene terephthalate) contacts are provided by Met-189 and Trp-213. Catalysis depends on charge relay system residues Asp-234 and His-266. An intrachain disulfide couples Cys-299 to Cys-317.

The protein belongs to the AB hydrolase superfamily.

It is found in the secreted. The protein resides in the periplasm. It catalyses the reaction an acetyl ester + H2O = an aliphatic alcohol + acetate + H(+). The enzyme catalyses a butanoate ester + H2O = an aliphatic alcohol + butanoate + H(+). It carries out the reaction pentanoate ester + H2O = pentanoate + an aliphatic alcohol + H(+). The catalysed reaction is an octanoate ester + H2O = an aliphatic alcohol + octanoate + H(+). It catalyses the reaction decanoate ester + H2O = decanoate + an aliphatic alcohol + H(+). The enzyme catalyses a dodecanoate ester + H2O = an aliphatic alcohol + dodecanoate + H(+). It carries out the reaction a tetradecanoate ester + H2O = an aliphatic alcohol + tetradecanoate + H(+). The catalysed reaction is hexadecanoate ester + H2O = an aliphatic alcohol + hexadecanoate + H(+). It catalyses the reaction cutin + H2O = cutin monomers.. The enzyme catalyses (ethylene terephthalate)(n) + H2O = (ethylene terephthalate)(n-1) + 4-[(2-hydroxyethoxy)carbonyl]benzoate + H(+). With respect to regulation, activated by magnesium ions. Activated by calcium ions. Its function is as follows. Catalyzes the hydrolysis of cutin, a polyester that forms the structure of plant cuticle. Shows esterase activity towards p-nitrophenol-linked aliphatic esters (pNP-aliphatic esters). Capable of degrading the plastic poly(ethylene terephthalate) (PET), the most abundant polyester plastic in the world. The sequence is that of Cutinase cut1 from Thermobifida fusca (Thermomonospora fusca).